Reading from the N-terminus, the 159-residue chain is Ribosomal RNA large subunit methyltransferase H (159 aa).

Residues L76, G108, and 127–132 (LSDMTF) contribute to the S-adenosyl-L-methionine site.

Belongs to the RNA methyltransferase RlmH family. As to quaternary structure, homodimer.

The protein localises to the cytoplasm. It catalyses the reaction pseudouridine(1915) in 23S rRNA + S-adenosyl-L-methionine = N(3)-methylpseudouridine(1915) in 23S rRNA + S-adenosyl-L-homocysteine + H(+). Specifically methylates the pseudouridine at position 1915 (m3Psi1915) in 23S rRNA. This is Ribosomal RNA large subunit methyltransferase H from Acetivibrio thermocellus (strain ATCC 27405 / DSM 1237 / JCM 9322 / NBRC 103400 / NCIMB 10682 / NRRL B-4536 / VPI 7372) (Clostridium thermocellum).